Consider the following 192-residue polypeptide: Protein GrpE (192 aa).

The tract at residues 1 to 43 is disordered; that stretch reads MSKEEFPHEKDLKDEVTPDKAPKKDPKAASKEEVKEDPAKDYE.

The protein belongs to the GrpE family. As to quaternary structure, homodimer.

It localises to the cytoplasm. In terms of biological role, participates actively in the response to hyperosmotic and heat shock by preventing the aggregation of stress-denatured proteins, in association with DnaK and GrpE. It is the nucleotide exchange factor for DnaK and may function as a thermosensor. Unfolded proteins bind initially to DnaJ; upon interaction with the DnaJ-bound protein, DnaK hydrolyzes its bound ATP, resulting in the formation of a stable complex. GrpE releases ADP from DnaK; ATP binding to DnaK triggers the release of the substrate protein, thus completing the reaction cycle. Several rounds of ATP-dependent interactions between DnaJ, DnaK and GrpE are required for fully efficient folding. This chain is Protein GrpE, found in Lactobacillus gasseri (strain ATCC 33323 / DSM 20243 / BCRC 14619 / CIP 102991 / JCM 1131 / KCTC 3163 / NCIMB 11718 / NCTC 13722 / AM63).